A 90-amino-acid chain; its full sequence is Small ribosomal subunit protein uS15c (90 aa).

The protein belongs to the universal ribosomal protein uS15 family. As to quaternary structure, part of the 30S ribosomal subunit.

The protein resides in the plastid. This is Small ribosomal subunit protein uS15c (rps15) from Cuscuta reflexa (Southern Asian dodder).